The following is a 340-amino-acid chain: Protein RecA (340 aa).

An ATP-binding site is contributed by G65 to T72.

Belongs to the RecA family.

The protein resides in the cytoplasm. In terms of biological role, can catalyze the hydrolysis of ATP in the presence of single-stranded DNA, the ATP-dependent uptake of single-stranded DNA by duplex DNA, and the ATP-dependent hybridization of homologous single-stranded DNAs. It interacts with LexA causing its activation and leading to its autocatalytic cleavage. The polypeptide is Protein RecA (Thermus thermophilus).